Here is an 89-residue protein sequence, read N- to C-terminus: Small ribosomal subunit protein uS15c (89 aa).

The protein belongs to the universal ribosomal protein uS15 family. Part of the 30S ribosomal subunit.

It localises to the plastid. Its subcellular location is the chloroplast. This chain is Small ribosomal subunit protein uS15c (rps15), found in Chloranthus spicatus (Chulantree).